The chain runs to 1541 residues: WD repeat-containing protein 62 (1541 aa).

A2 bears the N-acetylalanine mark. S33 carries the post-translational modification Phosphoserine. Position 46 is a phosphothreonine (T46). WD repeat units lie at residues 109-150 (TARK…QVAE), 153-194 (GHKY…VVAS), 196-234 (KVSCRVIALSFSEDSSYFVTVGNRHVRFWFLEVSTEAKV), 291-330 (INLKVSLSSCLCVSQELIFCGCTDGIVRIFQAHSLHYLAN), 357-396 (AVYPDTVALTFDPNHQWLSCVYKDHSIYIWDVKDINKVGK), 402-450 (FHSS…DSHW), 490-529 (DMKAGVRVMQVSPDGQHLASGDRSGNLRIHELHFMDELVR), 532-574 (AHDA…SLEQ), 578-618 (DHSS…DGLH), 626-665 (AEKTTLYDMDIDITQKYVAVACQDRNVRVYNTVNGKQKKC), 671-713 (GDEG…KMFG), and 714-752 (HSEIITGMKFTYDCRHLITVSGDSCVFIWHLGPEITNCM). Position 501 is a phosphoserine (S501). Disordered stretches follow at residues 762–820 (REQP…KESL) and 911–1050 (LSQS…LPQT). Over residues 770 to 780 (KDGKWSRDPRQ) the composition is skewed to basic and acidic residues. Over residues 781 to 795 (ETCTSMPSEISLSPG) the composition is skewed to polar residues. A compositionally biased stretch (acidic residues) spans 797–809 (QTEDELEEECEPE). The WD 13 repeat unit spans residues 803–846 (EEECEPEELLKTPSKESLDSDPRCLLTNGKLPLWAKRLLGDDDV). Basic and acidic residues predominate over residues 810–820 (ELLKTPSKESL). Residues 937–948 (VSELLCSLESEV) are compositionally biased toward low complexity. Position 943 is a phosphoserine (S943). The segment covering 1008–1026 (PPRPDPDPPFDVAVPPAPG) has biased composition (pro residues). T1050 carries the phosphothreonine modification. 3 positions are modified to phosphoserine: S1095, S1125, and S1151. 2 disordered regions span residues 1133 to 1153 (LAGSQPRAEPLRAGTGYTSPG) and 1185 to 1212 (SSSSVPPTDKTPPTPTALPTPGLAQGVH). One copy of the WD 14 repeat lies at 1138-1180 (PRAEPLRAGTGYTSPGRTNVLSAGKAEEPLEAWSPLTSCLTGL). Residues 1193-1202 (DKTPPTPTAL) show a composition bias toward pro residues. 3 positions are modified to phosphoserine: S1235, S1255, and S1256. Residues 1273-1293 (TVTPSSDSEGQEPALPSRGNH) are disordered. Phosphothreonine is present on T1275.

As to quaternary structure, can form homodimers (via C-terminus). Interacts (via C-terminus) with MAPKBP1 (via C-terminus). Interacts with CDK5RAP2, CEP152, CEP63 and KIAA0753. CEP63, CDK5RAP2, CEP152, WDR62 are proposed to form a stepwise assembled complex at the centrosome forming a ring near parental centrioles.

The protein localises to the nucleus. Its subcellular location is the cytoplasm. The protein resides in the cytoskeleton. It is found in the spindle pole. It localises to the microtubule organizing center. The protein localises to the centrosome. Its subcellular location is the centriole. In terms of biological role, required for cerebral cortical development. Plays a role in neuronal proliferation and migration. Plays a role in mother-centriole-dependent centriole duplication; the function seems also to involve CEP152, CDK5RAP2 and CEP63 through a stepwise assembled complex at the centrosome that recruits CDK2 required for centriole duplication. This is WD repeat-containing protein 62 (WDR62) from Sus scrofa (Pig).